A 652-amino-acid polypeptide reads, in one-letter code: Acetyl-coenzyme A synthetase (652 aa).

CoA is bound by residues 189 to 192 (RGGK) and Thr311. ATP is bound by residues 387-389 (GEP), 411-416 (DTWWQT), Asp500, and Arg515. Ser523 provides a ligand contact to CoA. Arg526 lines the ATP pocket. Mg(2+) contacts are provided by Val537, His539, and Val542. Arg584 serves as a coordination point for CoA. Residue Lys609 is modified to N6-acetyllysine.

The protein belongs to the ATP-dependent AMP-binding enzyme family. Requires Mg(2+) as cofactor. Acetylated. Deacetylation by the SIR2-homolog deacetylase activates the enzyme.

It catalyses the reaction acetate + ATP + CoA = acetyl-CoA + AMP + diphosphate. Catalyzes the conversion of acetate into acetyl-CoA (AcCoA), an essential intermediate at the junction of anabolic and catabolic pathways. AcsA undergoes a two-step reaction. In the first half reaction, AcsA combines acetate with ATP to form acetyl-adenylate (AcAMP) intermediate. In the second half reaction, it can then transfer the acetyl group from AcAMP to the sulfhydryl group of CoA, forming the product AcCoA. This is Acetyl-coenzyme A synthetase from Bartonella henselae (strain ATCC 49882 / DSM 28221 / CCUG 30454 / Houston 1) (Rochalimaea henselae).